Here is a 101-residue protein sequence, read N- to C-terminus: Protein translation factor SUI1 homolog (101 aa).

It belongs to the SUI1 family.

The protein is Protein translation factor SUI1 homolog of Aeropyrum pernix (strain ATCC 700893 / DSM 11879 / JCM 9820 / NBRC 100138 / K1).